The following is a 243-amino-acid chain: uncharacterized protein (243 aa).

The protein belongs to the mycobacterial PPE family.

The protein resides in the cell membrane. This is an uncharacterized protein from Mycobacterium tuberculosis (strain CDC 1551 / Oshkosh).